Here is a 525-residue protein sequence, read N- to C-terminus: Anti-silencing protein 2 (525 aa).

The disordered stretch occupies residues 467 to 525 (LPRVPTDSPQLPSKDKSQETAKKDDRPKLVANEPVTLDTSTPPVAQSLADSKHCSGLHK). The span at 479-494 (SKDKSQETAKKDDRPK) shows a compositional bias: basic and acidic residues.

Functionally, derepression of silent mating type loci when overexpressed. This is Anti-silencing protein 2 (ASF2) from Saccharomyces cerevisiae (strain ATCC 204508 / S288c) (Baker's yeast).